The chain runs to 447 residues: Na(+)/H(+) antiporter NhaA 2 (447 aa).

10 helical membrane-spanning segments follow: residues 34-54 (VGGV…NSPW), 77-97 (LTLG…VVGL), 115-135 (ALPI…FVLV), 146-166 (GWAI…AVIG), 176-196 (FLLT…AVFY), 200-220 (INGL…LCVQ), 290-310 (VSAG…SIGG), 321-341 (PITL…IVLT), 359-379 (WVDV…SLLI), and 393-413 (FVKI…AVVL).

Belongs to the NhaA Na(+)/H(+) (TC 2.A.33) antiporter family.

It localises to the cell membrane. The enzyme catalyses Na(+)(in) + 2 H(+)(out) = Na(+)(out) + 2 H(+)(in). Functionally, na(+)/H(+) antiporter that extrudes sodium in exchange for external protons. In Mycolicibacterium gilvum (strain PYR-GCK) (Mycobacterium gilvum (strain PYR-GCK)), this protein is Na(+)/H(+) antiporter NhaA 2.